The chain runs to 247 residues: MDYQTFEKVNKFINVKAYIFFLTQELKQQYKLSLKELLILAYFYYKNEHSISLKEIIGDILYKQSDVVKNIKSLSKKGFINKSRNEADERRIFVSVTPIQRKKIACVINELDKIIKGFNKERDYIKYQWAPKYSKEFFILFMNIMYSKDFLKYRFNLTFLDLSILYVISSRKNEILNLKDLFESIRFMYPQIVRSVNRLNNKGMLIKERSLADERIVLIKINKIQYNTIKSIFTDTSKILKPRKFFF.

2 DNA-binding regions (H-T-H motif) span residues 53 to 76 (LKEI…SLSK) and 178 to 201 (LKDL…RLNN).

This sequence belongs to the SarA family.

It is found in the cytoplasm. In terms of biological role, positive regulator of RNAII and RNAIII in a cell density-dependent manner. It can contribute to the expression of virulence genes controlled by agr. May also regulate target genes via an agr-independent pathway. The protein is HTH-type transcriptional regulator SarU (sarU) of Staphylococcus aureus (strain COL).